A 211-amino-acid polypeptide reads, in one-letter code: FMN-dependent NADH:quinone oxidoreductase 2 (211 aa).

Residues Ser-10 and 17-19 (SRS) contribute to the FMN site.

This sequence belongs to the azoreductase type 1 family. Homodimer. It depends on FMN as a cofactor.

It carries out the reaction 2 a quinone + NADH + H(+) = 2 a 1,4-benzosemiquinone + NAD(+). The enzyme catalyses N,N-dimethyl-1,4-phenylenediamine + anthranilate + 2 NAD(+) = 2-(4-dimethylaminophenyl)diazenylbenzoate + 2 NADH + 2 H(+). Quinone reductase that provides resistance to thiol-specific stress caused by electrophilic quinones. Its function is as follows. Also exhibits azoreductase activity. Catalyzes the reductive cleavage of the azo bond in aromatic azo compounds to the corresponding amines. This chain is FMN-dependent NADH:quinone oxidoreductase 2, found in Listeria monocytogenes serovar 1/2a (strain ATCC BAA-679 / EGD-e).